An 834-amino-acid polypeptide reads, in one-letter code: Periplasmic nitrate reductase (834 aa).

A signal peptide (tat-type signal) is located at residues 1-32; it reads MTDMKIDRRQMLKLEAAAIAAAAAGMPSTSLA. The 4Fe-4S Mo/W bis-MGD-type domain maps to 44–100; the sequence is LKWDKAACRFCGTGCSVMVATKDNRVVATHGDIKAEVNRGLNCVKGYFLSKIMYGHD. The [4Fe-4S] cluster site is built by cysteine 51, cysteine 54, cysteine 58, and cysteine 86. Mo-bis(molybdopterin guanine dinucleotide)-binding positions include lysine 88, glutamine 155, asparagine 180, cysteine 184, 217 to 224, 248 to 252, 267 to 269, methionine 378, glutamine 382, asparagine 488, 514 to 515, lysine 537, aspartate 564, and 724 to 733; these read WGSNMAEM, STFEH, QTD, SD, and TGRVVEHWHS. Tryptophan 800 contributes to the substrate binding site. Mo-bis(molybdopterin guanine dinucleotide) contacts are provided by asparagine 808 and lysine 825.

Belongs to the prokaryotic molybdopterin-containing oxidoreductase family. NasA/NapA/NarB subfamily. Component of the periplasmic nitrate reductase NapAB complex composed of NapA and NapB. The cofactor is [4Fe-4S] cluster. Mo-bis(molybdopterin guanine dinucleotide) is required as a cofactor. Predicted to be exported by the Tat system. The position of the signal peptide cleavage has not been experimentally proven.

The protein localises to the periplasm. It carries out the reaction 2 Fe(II)-[cytochrome] + nitrate + 2 H(+) = 2 Fe(III)-[cytochrome] + nitrite + H2O. Its function is as follows. Catalytic subunit of the periplasmic nitrate reductase complex NapAB. Receives electrons from NapB and catalyzes the reduction of nitrate to nitrite. The polypeptide is Periplasmic nitrate reductase (Bradyrhizobium sp. (strain BTAi1 / ATCC BAA-1182)).